The sequence spans 228 residues: Small ribosomal subunit protein uS3 (228 aa).

In terms of domain architecture, KH type-2 spans 39–107 (VREFIRERLK…PVHINIEEIR (69 aa)).

It belongs to the universal ribosomal protein uS3 family. Part of the 30S ribosomal subunit. Forms a tight complex with proteins S10 and S14.

Binds the lower part of the 30S subunit head. Binds mRNA in the 70S ribosome, positioning it for translation. This chain is Small ribosomal subunit protein uS3, found in Halorhodospira halophila (strain DSM 244 / SL1) (Ectothiorhodospira halophila (strain DSM 244 / SL1)).